We begin with the raw amino-acid sequence, 235 residues long: Chaperone protein TorD (235 aa).

The protein belongs to the TorD/DmsD family. TorD subfamily.

Its subcellular location is the cytoplasm. In terms of biological role, involved in the biogenesis of TorA. Acts on TorA before the insertion of the molybdenum cofactor and, as a result, probably favors a conformation of the apoenzyme that is competent for acquiring the cofactor. The polypeptide is Chaperone protein TorD (Shewanella amazonensis (strain ATCC BAA-1098 / SB2B)).